The chain runs to 323 residues: Probable oxidoreductase patJ (323 aa).

Positions 291-323 (DQSANGVNGHATGVEAKKKQLGDMTRRRSGAQE) are disordered. The segment covering 305–316 (EAKKKQLGDMTR) has biased composition (basic and acidic residues).

This sequence belongs to the oxidoreductase OpS7 family.

It is found in the vacuole lumen. It localises to the cytoplasmic vesicle lumen. Its pathway is mycotoxin biosynthesis; patulin biosynthesis. Functionally, probable oxidoreductase; part of the gene cluster that mediates the biosynthesis of patulin, an acetate-derived tetraketide mycotoxin produced by several fungal species that shows antimicrobial properties against several bacteria. PatJ acts with patO in the vacuole to convert gentisyl alcohol to isoepoxydon. The pathway begins with the synthesis of 6-methylsalicylic acid by the polyketide synthase (PKS) patK via condensation of acetate and malonate units. The 6-methylsalicylic acid decarboxylase patG then catalyzes the decarboxylation of 6-methylsalicylic acid to yield m-cresol (also known as 3-methylphenol). These first reactions occur in the cytosol. The intermediate m-cresol is then transported into the endoplasmic reticulum where the cytochrome P450 monooxygenase patH converts it to m-hydroxybenzyl alcohol, which is further converted to gentisyl alcohol by the cytochrome P450 monooxygenase patI. The oxidoreductases patJ and patO further convert gentisyl alcohol to isoepoxydon in the vacuole. PatN catalyzes then the transformation of isoepoxydon into phyllostine. The cluster protein patF is responsible for the conversion from phyllostine to neopatulin whereas the alcohol dehydrogenase patD converts neopatulin to E-ascladiol. The steps between isoepoxydon and E-ascladiol occur in the cytosol, and E-ascladiol is probably secreted to the extracellular space by one of the cluster-specific transporters patC or patM. Finally, the secreted patulin synthase patE catalyzes the conversion of E-ascladiol to patulin. The polypeptide is Probable oxidoreductase patJ (Aspergillus clavatus (strain ATCC 1007 / CBS 513.65 / DSM 816 / NCTC 3887 / NRRL 1 / QM 1276 / 107)).